The primary structure comprises 591 residues: Paralemmin-3 (591 aa).

4 consecutive repeats follow at residues 171-174 (EKNK), 183-186 (EKNQ), 224-227 (EKNQ), and 234-237 (KNQD). The segment covering 282–293 (DQTQSTSDQNME) has biased composition (polar residues). 3 disordered regions span residues 282-317 (DQTQ…TKDQ), 332-413 (KGTT…QNQD), and 515-591 (PDLK…CVVM). Composition is skewed to basic and acidic residues over residues 306 to 317 (SQSEGKIQTKDQ) and 349 to 383 (EPKE…DMDP). Composition is skewed to polar residues over residues 385–413 (QLST…QNQD) and 528–542 (QESS…TIAQ). Residues 543–554 (SSSAEGNSSPES) show a composition bias toward low complexity. Over residues 559 to 575 (QKSQGTDSQQGGNTATQ) the composition is skewed to polar residues. Residues 579–583 (RRKKK) carry the Nuclear localization signal motif. S-palmitoyl cysteine attachment occurs at residues Cys-585 and Cys-587. Position 588 is a cysteine methyl ester (Cys-588). Cys-588 carries S-farnesyl cysteine lipidation. The propeptide at 589–591 (VVM) is removed in mature form.

It belongs to the paralemmin family. Post-translationally, may be phosphorylated during oocyte maturation. Palmitoylated on Cys-585 and Cys-587 and prenylated on Cys-588; which is required for membrane association. In terms of tissue distribution, in Xenopus oocyte, in the central nervous system cells of tadpoles and adult frogs, and transiently in epithelial cells of stomach and gut of tadpoles. Highly expressed in kidney.

It is found in the cytoplasm. The protein resides in the nucleus. Its subcellular location is the cell membrane. Its function is as follows. Maternal ATP-binding protein that may have multiple functions during development, one of which may be associated with the development and maintenance of the central nervous system. The chain is Paralemmin-3 (palm3) from Xenopus laevis (African clawed frog).